The sequence spans 863 residues: Glycerol-3-phosphate acyltransferase (863 aa).

The tract at residues 1–29 (MPKKNSPLLPKETTTTQSSVDTSGSSNLT) is disordered. Over residues 12-29 (ETTTTQSSVDTSGSSNLT) the composition is skewed to polar residues. Positions 343–348 (SHRSHM) match the HXXXXD motif motif.

It belongs to the GPAT/DAPAT family.

It is found in the cell inner membrane. It catalyses the reaction sn-glycerol 3-phosphate + an acyl-CoA = a 1-acyl-sn-glycero-3-phosphate + CoA. It functions in the pathway phospholipid metabolism; CDP-diacylglycerol biosynthesis; CDP-diacylglycerol from sn-glycerol 3-phosphate: step 1/3. The chain is Glycerol-3-phosphate acyltransferase from Xylella fastidiosa (strain M23).